The primary structure comprises 495 residues: tRNA(Ile)-lysidine synthase (495 aa).

Position 26-31 (26-31 (SGGSDS)) interacts with ATP.

This sequence belongs to the tRNA(Ile)-lysidine synthase family.

It localises to the cytoplasm. The enzyme catalyses cytidine(34) in tRNA(Ile2) + L-lysine + ATP = lysidine(34) in tRNA(Ile2) + AMP + diphosphate + H(+). Functionally, ligates lysine onto the cytidine present at position 34 of the AUA codon-specific tRNA(Ile) that contains the anticodon CAU, in an ATP-dependent manner. Cytidine is converted to lysidine, thus changing the amino acid specificity of the tRNA from methionine to isoleucine. This Bartonella tribocorum (strain CIP 105476 / IBS 506) protein is tRNA(Ile)-lysidine synthase.